A 621-amino-acid polypeptide reads, in one-letter code: TOX high mobility group box family member 4 (621 aa).

Disordered stretches follow at residues 153–227 (LGLS…QKPV) and 305–333 (LDPA…ASIE). The residue at position 176 (Thr176) is a Phosphothreonine. Ser178, Ser181, and Ser182 each carry phosphoserine. Positions 183 to 193 (LHEDGVEDFRR) are enriched in basic and acidic residues. Residues 208-218 (KQKAPKKRKKK) show a composition bias toward basic residues. A Nuclear localization signal motif is present at residues 213–218 (KKRKKK). The segment at residues 223-291 (PQKPVSAYAL…EYLKALAAYK (69 aa)) is a DNA-binding region (HMG box). The span at 307 to 319 (PAPPSQTPSPPPM) shows a compositional bias: pro residues. Thr313 is subject to Phosphothreonine. Ser315 carries the post-translational modification Phosphoserine. Positions 320–333 (ATVDPASPAPASIE) are enriched in low complexity. Position 481 is an asymmetric dimethylarginine (Arg481). A compositionally biased stretch (polar residues) spans 510–525 (PTVESSPERPMNNSPE). The interval 510–529 (PTVESSPERPMNNSPEAHTV) is disordered. A phosphoserine mark is found at Ser533, Ser550, Ser552, Ser560, Ser562, and Ser567.

In terms of assembly, component of the PNUTS-PP1 phosphatase complex, composed of PPP1R10/PNUTS, TOX4, WDR82 and PPP1CA or PPP1CB or PPP1CC. Interacts with PPP1R10/PNUTS. Interacts with FOXO1 and CREB1 (increased by cAMP); FOXO1 and CREB1 are required for full induction of TOX4-dependent activity and the interactions are inhibited by insulin. As to expression, expressed in liver (at protein level).

The protein resides in the nucleus. Its subcellular location is the chromosome. In liver, recruited to target gene promoters following treatment with dexamethasone and cAMP. Binding is decreased in presence of insulin. In terms of biological role, transcription factor that modulates cell fate reprogramming from the somatic state to the pluripotent and neuronal fate. In liver, controls the expression of hormone-regulated gluconeogenic genes such as G6PC1 and PCK1. This regulation is independent of the insulin receptor activation. Also acts as a regulatory component of protein phosphatase 1 (PP1) complexes. Component of the PNUTS-PP1 protein phosphatase complex, a PP1 complex that regulates RNA polymerase II transcription pause-release. PNUTS-PP1 also plays a role in the control of chromatin structure and cell cycle progression during the transition from mitosis into interphase. This is TOX high mobility group box family member 4 from Homo sapiens (Human).